Consider the following 815-residue polypeptide: (-)-kolavenyl diphosphate synthase TPS14, chloroplastic (815 aa).

Residues Met-1–Ile-51 constitute a chloroplast transit peptide. Substrate is bound at residue Lys-247. 2 residues coordinate Mg(2+): Asp-379 and Asp-381. A DXDD motif motif is present at residues Asp-379–Asp-382. Lys-465 provides a ligand contact to substrate.

This sequence belongs to the terpene synthase family. Tpsc subfamily. Mg(2+) is required as a cofactor.

The protein resides in the plastid. It is found in the chloroplast. It catalyses the reaction (2E,6E,10E)-geranylgeranyl diphosphate = (-)-kolavenyl diphosphate. Its activity is regulated as follows. Inhibited by high concentrations of magnesium. Functionally, diterpene synthase that catalyzes the formation of (-)-kolavenyl diphosphate from geranylgeranyl diphosphate (GGPP). In Tripterygium wilfordii (Thunder God vine), this protein is (-)-kolavenyl diphosphate synthase TPS14, chloroplastic.